Reading from the N-terminus, the 306-residue chain is MRNERRKKKKTLLLTILTIIGLLVLGTGGYAYYLWHKAASTVASIHESIDKSKKRDKEVSINKKDPFSVLIMGVDERDGDKGRADTLIYMTVNPKTNTTDMVSIPRDTYTKIIGKGTMDKINHSYAFGGTQMTVDTVENFLDVPVDYFVKVNMESFRDVVDTLGGITVNSTFAFSYDGYSFGKGEITLNGKEALAYTRMRKEDPRGDFGRQDRQRQVIQGIINKGANISSITKFGDMFKVVENNVKTNLTFDNMWDIQSDYKGARKHIKQHELKGTGTKINGIYYYQADESALSDITKELKESLEK.

Over 1–11 the chain is Cytoplasmic; that stretch reads MRNERRKKKKT. A helical; Signal-anchor for type II membrane protein transmembrane segment spans residues 12-32; that stretch reads LLLTILTIIGLLVLGTGGYAY. The Extracellular portion of the chain corresponds to 33–306; the sequence is YLWHKAASTV…TKELKESLEK (274 aa).

The protein belongs to the LytR/CpsA/Psr (LCP) family. Interacts with MreB. Interacts with FloT.

It is found in the cell membrane. The protein localises to the membrane raft. The protein operates within cell wall biogenesis. Functionally, may catalyze the final step in cell wall teichoic acid biosynthesis, the transfer of the anionic cell wall polymers (APs) from their lipid-linked precursor to the cell wall peptidoglycan (PG). The chain is Polyisoprenyl-teichoic acid--peptidoglycan teichoic acid transferase TagU from Bacillus subtilis (strain 168).